The chain runs to 332 residues: Biotin synthase (332 aa).

The Radical SAM core domain occupies 46 to 275 (YYGKKVKLNM…SKEIRISGGR (230 aa)). [4Fe-4S] cluster is bound by residues C64, C68, and C71. Residues C108, C140, C200, and R270 each coordinate [2Fe-2S] cluster.

Belongs to the radical SAM superfamily. Biotin synthase family. Homodimer. It depends on [4Fe-4S] cluster as a cofactor. [2Fe-2S] cluster is required as a cofactor.

The catalysed reaction is (4R,5S)-dethiobiotin + (sulfur carrier)-SH + 2 reduced [2Fe-2S]-[ferredoxin] + 2 S-adenosyl-L-methionine = (sulfur carrier)-H + biotin + 2 5'-deoxyadenosine + 2 L-methionine + 2 oxidized [2Fe-2S]-[ferredoxin]. Its pathway is cofactor biosynthesis; biotin biosynthesis; biotin from 7,8-diaminononanoate: step 2/2. In terms of biological role, catalyzes the conversion of dethiobiotin (DTB) to biotin by the insertion of a sulfur atom into dethiobiotin via a radical-based mechanism. The sequence is that of Biotin synthase from Lysinibacillus sphaericus (Bacillus sphaericus).